The following is a 430-amino-acid chain: Glutamate-1-semialdehyde 2,1-aminomutase (430 aa).

An N6-(pyridoxal phosphate)lysine modification is found at K267.

The protein belongs to the class-III pyridoxal-phosphate-dependent aminotransferase family. HemL subfamily. As to quaternary structure, homodimer. Pyridoxal 5'-phosphate is required as a cofactor.

The protein localises to the cytoplasm. It catalyses the reaction (S)-4-amino-5-oxopentanoate = 5-aminolevulinate. The protein operates within porphyrin-containing compound metabolism; protoporphyrin-IX biosynthesis; 5-aminolevulinate from L-glutamyl-tRNA(Glu): step 2/2. This Anaeromyxobacter dehalogenans (strain 2CP-C) protein is Glutamate-1-semialdehyde 2,1-aminomutase.